Here is a 79-residue protein sequence, read N- to C-terminus: Alpha-actitoxin-Ms11a-4 (79 aa).

An N-terminal signal peptide occupies residues 1–23 (MKVLVAVLVFALLMCMFVDIAES). Residues 24–46 (RRRDNPEYPSGLRYDEEMGVFKR) constitute a propeptide that is removed on maturation. Disulfide bonds link C47–C61, C54–C67, and C60–C76. Residue Y78 is modified to Tyrosine amide.

It localises to the secreted. The protein localises to the nematocyst. Alpha-toxins act on postsynaptic membranes, they bind to the nicotinic acetylcholine receptors (nAChR) and thus inhibit them. This toxin very weakly competes with alpha-bungarotoxin for binding to orthosteric sites on muscle-type T.carlifornicus (IC(50)=14.95 uM) and human alpha-7/CHRNA7 nAChRs (IC(50)&gt;45 uM). The protein is Alpha-actitoxin-Ms11a-4 of Metridium senile (Brown sea anemone).